The primary structure comprises 87 residues: Small ribosomal subunit protein bS20 (87 aa).

The interval 1–21 (MANIKQQIKRNKTNEKRRLKN) is disordered. Basic residues predominate over residues 7–20 (QIKRNKTNEKRRLK).

Belongs to the bacterial ribosomal protein bS20 family.

Binds directly to 16S ribosomal RNA. In Phytoplasma mali (strain AT), this protein is Small ribosomal subunit protein bS20.